The primary structure comprises 500 residues: NAD(P)H-quinone oxidoreductase chain 4, chloroplastic (500 aa).

The next 13 helical transmembrane spans lie at phenylalanine 4 to leucine 24, tyrosine 35 to phenylalanine 55, isoleucine 87 to valine 107, leucine 134 to methionine 154, phenylalanine 167 to leucine 187, isoleucine 211 to histidine 231, histidine 242 to valine 262, alanine 272 to alanine 292, isoleucine 305 to aspartate 325, glycine 330 to glycine 350, leucine 386 to threonine 406, isoleucine 416 to methionine 436, and leucine 462 to valine 482.

It belongs to the complex I subunit 4 family.

Its subcellular location is the plastid. The protein localises to the chloroplast thylakoid membrane. It catalyses the reaction a plastoquinone + NADH + (n+1) H(+)(in) = a plastoquinol + NAD(+) + n H(+)(out). The enzyme catalyses a plastoquinone + NADPH + (n+1) H(+)(in) = a plastoquinol + NADP(+) + n H(+)(out). In Crucihimalaya wallichii (Rock-cress), this protein is NAD(P)H-quinone oxidoreductase chain 4, chloroplastic.